The following is a 426-amino-acid chain: MRKWIAAAGLAYVLYGLFFYWYFFLSGDSAIPEAVKGTQADPASFMKPSELAVAEQYSNVKNFLFFIGVPLDWFLFFVLLVSGVSKKIKKWIEAAVPFRFLQTVGFVFVLSLITTLVTLPLDWIGYQVSLDYNISTQTTASWAKDQVISFWISFPIFTLCVLVFYWLIKRHEKKWWLYAWLLTVPFSLFLFFIQPVIIDPLYNDFYPLKNKELESKILELADEANIPADHVYEVNMSEKTNALNAYVTGIGANKRIVLWDTTLNKLDDSEILFIMGHEMGHYVMKHVYIGLAGYLLVSLAGFYVIDKLYKRTVRLTRSMFHLEGRHDLAALPLLLLLFSVLSFAVTPFSNAVSRYQENKADQYGIELTENREAAVKTFQDLAVTGLSQVDPPVLVKIFRGSHPSIMERIQHAEKEENAPEHQDADK.

H277 lines the Zn(2+) pocket. Residue E278 is part of the active site. Zn(2+)-binding residues include H281 and E357.

It belongs to the peptidase M48B family. Requires Zn(2+) as cofactor.

This is an uncharacterized protein from Bacillus subtilis (strain 168).